We begin with the raw amino-acid sequence, 947 residues long: Microtubule cross-linking factor 3 (947 aa).

An N-terminal signal peptide occupies residues 1 to 21 (MSQPPIGGAAPATAAASPAAA). Disordered regions lie at residues 1–251 (MSQP…SYWK), 266–368 (KERA…TLKN), and 496–524 (LSLK…DNED). 3 stretches are compositionally biased toward low complexity: residues 9-24 (AAPA…AATE), 72-81 (QQQLQQQQQQ), and 109-137 (APKG…ALGG). Over residues 141–151 (GPPEEPPRELE) the composition is skewed to basic and acidic residues. Over residues 164 to 180 (GEGGGGGGEGGGAGGGS) the composition is skewed to gly residues. A compositionally biased stretch (low complexity) spans 214 to 236 (ASPSPSSSSAGKTPGTGSRNSGS). Positions 237 to 248 (GVAGGGSGGGGS) are enriched in gly residues. 2 stretches are compositionally biased toward low complexity: residues 287 to 297 (SSRSSPVSGPP) and 304 to 325 (AVAS…AEGS). Residues 342 to 726 (HPQQLQEQEE…GKVMQLQYEN (385 aa)) adopt a coiled-coil conformation. Basic and acidic residues-rich tracts occupy residues 355–368 (EMEK…TLKN) and 496–513 (LSLK…EKKA). At Ser-569 the chain carries Phosphoserine. A disordered region spans residues 743-786 (GIRGSPRDSDAESDAGKKESDDDSRPPHRKREGPIGGESDSEEV). A compositionally biased stretch (basic and acidic residues) spans 747-768 (SPRDSDAESDAGKKESDDDSRP). Residue Ser-781 is modified to Phosphoserine. Residues 811–835 (DRQQMKDIRSEAERLGKTIDRLIAD) adopt a coiled-coil conformation. Residues 915–935 (PIILLILILVLFSSLSYTTIF) traverse the membrane as a helical segment.

This sequence belongs to the MTCL family.

The protein resides in the membrane. The chain is Microtubule cross-linking factor 3 from Homo sapiens (Human).